Here is a 232-residue protein sequence, read N- to C-terminus: Phosphoglycolate phosphatase (232 aa).

D13 functions as the Nucleophile in the catalytic mechanism. Residues D13, D15, and D175 each coordinate Mg(2+).

The protein belongs to the HAD-like hydrolase superfamily. CbbY/CbbZ/Gph/YieH family. Monomer. Requires Mg(2+) as cofactor. It depends on chloride as a cofactor.

The enzyme catalyses 2-phosphoglycolate + H2O = glycolate + phosphate. It functions in the pathway organic acid metabolism; glycolate biosynthesis; glycolate from 2-phosphoglycolate: step 1/1. Its function is as follows. Specifically catalyzes the dephosphorylation of 2-phosphoglycolate. Is involved in the dissimilation of the intracellular 2-phosphoglycolate formed during the DNA repair of 3'-phosphoglycolate ends, a major class of DNA lesions induced by oxidative stress. This is Phosphoglycolate phosphatase from Yersinia pestis.